The primary structure comprises 462 residues: Glycoprotein endo-alpha-1,2-mannosidase (462 aa).

The Cytoplasmic portion of the chain corresponds to 1 to 9; sequence MAKFRRRTC. Residues 10 to 30 traverse the membrane as a helical; Signal-anchor for type II membrane protein segment; the sequence is IILSLFIVFIFSLMMGLKMLW. The Lumenal portion of the chain corresponds to 31-462; that stretch reads PNAASFGPPF…YALDQQLPAS (432 aa). The catalytic stretch occupies residues 60 to 462; the sequence is DFQRSDRIDM…YALDQQLPAS (403 aa).

It belongs to the glycosyl hydrolase 99 family. Undergoes proteolytic cleavage in the C-terminal region. Highly expressed in the liver and kidney.

It localises to the golgi apparatus membrane. It catalyses the reaction N-{alpha-Glc-(1-&gt;3)-alpha-Man-(1-&gt;2)-alpha-Man-(1-&gt;2)-alpha-Man-(1-&gt;3)-[alpha-Man-(1-&gt;2)-alpha-Man-(1-&gt;3)-[alpha-Man-(1-&gt;2)-alpha-Man-(1-&gt;6)]-alpha-Man-(1-&gt;6)]-beta-Man-(1-&gt;4)-beta-GlcNAc-(1-&gt;4)-beta-GlcNAc}-L-asparaginyl-[protein] + H2O = alpha-D-glucosyl-(1-&gt;3)-D-mannopyranose + N(4)-{alpha-D-Man-(1-&gt;2)-alpha-D-Man-(1-&gt;3)-[alpha-D-Man-(1-&gt;2)-alpha-D-Man-(1-&gt;3)-[alpha-D-Man-(1-&gt;2)-alpha-D-Man-(1-&gt;6)]-alpha-D-Man-(1-&gt;6)]-beta-D-Man-(1-&gt;4)-beta-D-GlaNAc-(1-&gt;4)-beta-D-GlcNAc}-L-asparaginyl-[protein] (N-glucan mannose isomer 8A1,2,3B1,2). This is Glycoprotein endo-alpha-1,2-mannosidase (Manea) from Rattus norvegicus (Rat).